A 345-amino-acid polypeptide reads, in one-letter code: Protein RecA (345 aa).

Position 63–70 (63–70) interacts with ATP; the sequence is GPESSGKT. The tract at residues 326 to 345 is disordered; the sequence is VLSDALMTDPEPDADGTPED. A compositionally biased stretch (acidic residues) spans 335–345; that stretch reads PEPDADGTPED.

Belongs to the RecA family.

The protein resides in the cytoplasm. Its function is as follows. Can catalyze the hydrolysis of ATP in the presence of single-stranded DNA, the ATP-dependent uptake of single-stranded DNA by duplex DNA, and the ATP-dependent hybridization of homologous single-stranded DNAs. It interacts with LexA causing its activation and leading to its autocatalytic cleavage. The chain is Protein RecA from Gluconobacter oxydans (strain 621H) (Gluconobacter suboxydans).